A 101-amino-acid chain; its full sequence is C-X-C motif chemokine 3 (101 aa).

Positions 1–32 (MAPPTRRLLNAALLLLLLLMATSHQPSGTVVA) are cleaved as a signal peptide. 2 cysteine pairs are disulfide-bonded: Cys-37–Cys-63 and Cys-39–Cys-79.

It belongs to the intercrine alpha (chemokine CxC) family.

It is found in the secreted. In terms of biological role, ligand for CXCR2. Has chemotactic activity for neutrophils. May play a role in inflammation and exert its effects on endothelial cells in an autocrine fashion. This is C-X-C motif chemokine 3 (Cxcl3) from Rattus norvegicus (Rat).